Here is a 251-residue protein sequence, read N- to C-terminus: Triosephosphate isomerase (251 aa).

9-11 (NWK) contributes to the substrate binding site. The active-site Electrophile is the His-95. The Proton acceptor role is filled by Glu-167. Substrate-binding positions include Gly-173, Ser-212, and 233-234 (GG).

Belongs to the triosephosphate isomerase family. Homodimer.

The protein resides in the cytoplasm. It carries out the reaction D-glyceraldehyde 3-phosphate = dihydroxyacetone phosphate. It functions in the pathway carbohydrate biosynthesis; gluconeogenesis. Its pathway is carbohydrate degradation; glycolysis; D-glyceraldehyde 3-phosphate from glycerone phosphate: step 1/1. Involved in the gluconeogenesis. Catalyzes stereospecifically the conversion of dihydroxyacetone phosphate (DHAP) to D-glyceraldehyde-3-phosphate (G3P). This is Triosephosphate isomerase from Pseudomonas fluorescens (strain Pf0-1).